The following is an 815-amino-acid chain: Serotype-specific mannosyltransferase WbdA (815 aa).

The alpha-(1-&gt;2)-mannosyltransferase stretch occupies residues 1–374 (MSRAIIENAG…WANTAHLAIE (374 aa)). The interval 431–804 (KLLVDISVLA…WKQSAEFLLK (374 aa)) is alpha-(1-&gt;3)-mannosyltransferase.

The protein belongs to the glycosyltransferase group 1 family. Glycosyltransferase 4 subfamily. In terms of assembly, monomer. Interacts with the C-terminal region of WbdD.

Its subcellular location is the cell inner membrane. The catalysed reaction is [alpha-D-Man-(1-&gt;3)-alpha-D-Man-(1-&gt;3)-alpha-D-Man-(1-&gt;2)-alpha-D-Man-(1-&gt;2)](n)-alpha-D-Man-(1-&gt;3)-alpha-D-Man-(1-&gt;3)-alpha-D-Man-(1-&gt;3)-alpha-D-GlcNAc-di-trans,octa-cis-undecaprenyl diphosphate + 2 GDP-alpha-D-mannose = alpha-D-Man-(1-&gt;2)-alpha-D-Man-(1-&gt;2)-[alpha-D-Man-(1-&gt;3)-alpha-D-Man-(1-&gt;3)-alpha-D-Man-(1-&gt;2)-alpha-D-Man-(1-&gt;2)](n)-alpha-D-Man-(1-&gt;3)-alpha-D-Man-(1-&gt;3)-alpha-D-Man-(1-&gt;3)-alpha-D-GlcNAc-di-trans,octa-cis-undecaprenyl diphosphate + 2 GDP + 2 H(+). It carries out the reaction alpha-D-Man-(1-&gt;2)-alpha-D-Man-(1-&gt;2)-[alpha-D-Man-(1-&gt;3)-alpha-D-Man-(1-&gt;3)-alpha-D-Man-(1-&gt;2)-alpha-D-Man-(1-&gt;2)](n)-alpha-D-Man-(1-&gt;3)-alpha-D-Man-(1-&gt;3)-alpha-D-Man-(1-&gt;3)-alpha-D-GlcNAc-di-trans,octa-cis-undecaprenyl diphosphate + 2 GDP-alpha-D-mannose = [alpha-D-Man-(1-&gt;3)-alpha-D-Man-(1-&gt;3)-alpha-D-Man-(1-&gt;2)-alpha-D-Man-(1-&gt;2)](n+1)-alpha-D-Man-(1-&gt;3)-alpha-D-Man-(1-&gt;3)-alpha-D-Man-(1-&gt;3)-alpha-D-GlcNAc-di-trans,octa-cis-undecaprenyl diphosphate + 2 GDP + 2 H(+). Its pathway is bacterial outer membrane biogenesis; LPS O-antigen biosynthesis. Mannosyltransferase involved in the biosynthesis of the repeat unit of the lipopolysaccharide (LPS) O-antigen region. Catalyzes the polymerization of a tetrasaccharide repeat unit containing two alpha-(1-&gt;3)- and two alpha-(1-&gt;2)-linked mannopyranose residues. In Escherichia coli, this protein is Serotype-specific mannosyltransferase WbdA.